Reading from the N-terminus, the 273-residue chain is ATP synthase subunit a (273 aa).

5 helical membrane passes run 44 to 64, 104 to 124, 149 to 169, 223 to 243, and 244 to 264; these read WHID…WLFY, IAPL…MDLI, DLNV…FYSI, LIFI…SVPW, and AIFH…LTIV.

It belongs to the ATPase A chain family. As to quaternary structure, F-type ATPases have 2 components, CF(1) - the catalytic core - and CF(0) - the membrane proton channel. CF(1) has five subunits: alpha(3), beta(3), gamma(1), delta(1), epsilon(1). CF(0) has three main subunits: a(1), b(2) and c(9-12). The alpha and beta chains form an alternating ring which encloses part of the gamma chain. CF(1) is attached to CF(0) by a central stalk formed by the gamma and epsilon chains, while a peripheral stalk is formed by the delta and b chains.

The protein resides in the cell inner membrane. Its function is as follows. Key component of the proton channel; it plays a direct role in the translocation of protons across the membrane. The sequence is that of ATP synthase subunit a from Shewanella putrefaciens (strain CN-32 / ATCC BAA-453).